Here is an 82-residue protein sequence, read N- to C-terminus: Large ribosomal subunit protein uL23 (82 aa).

It belongs to the universal ribosomal protein uL23 family. Part of the 50S ribosomal subunit. Contacts protein L29.

Functionally, binds to 23S rRNA. One of the proteins that surrounds the polypeptide exit tunnel on the outside of the ribosome. This is Large ribosomal subunit protein uL23 from Sulfurisphaera tokodaii (strain DSM 16993 / JCM 10545 / NBRC 100140 / 7) (Sulfolobus tokodaii).